We begin with the raw amino-acid sequence, 245 residues long: SPX domain-containing protein 3 (245 aa).

One can recognise an SPX domain in the interval 1–142 (MKFGKRIKEQ…RGGLRSPFIQ (142 aa)).

Functionally, plays a positive role in plant adaptation to phosphate starvation and exerts negative feedback regulation of SPX1. This is SPX domain-containing protein 3 (SPX3) from Arabidopsis thaliana (Mouse-ear cress).